The following is a 251-amino-acid chain: 3-deoxy-manno-octulosonate cytidylyltransferase (251 aa).

Belongs to the KdsB family.

The protein localises to the cytoplasm. It carries out the reaction 3-deoxy-alpha-D-manno-oct-2-ulosonate + CTP = CMP-3-deoxy-beta-D-manno-octulosonate + diphosphate. It functions in the pathway nucleotide-sugar biosynthesis; CMP-3-deoxy-D-manno-octulosonate biosynthesis; CMP-3-deoxy-D-manno-octulosonate from 3-deoxy-D-manno-octulosonate and CTP: step 1/1. It participates in bacterial outer membrane biogenesis; lipopolysaccharide biosynthesis. Activates KDO (a required 8-carbon sugar) for incorporation into bacterial lipopolysaccharide in Gram-negative bacteria. This Brucella canis (strain ATCC 23365 / NCTC 10854 / RM-666) protein is 3-deoxy-manno-octulosonate cytidylyltransferase.